Reading from the N-terminus, the 291-residue chain is tRNA N(3)-cytidine methyltransferase METTL8, mitochondrial (291 aa).

Residues M1–Y21 constitute a mitochondrion transit peptide. K80 is covalently cross-linked (Glycyl lysine isopeptide (Lys-Gly) (interchain with G-Cter in SUMO)). Positions 89 and 93 each coordinate S-adenosyl-L-methionine. The tract at residues F141–E187 is disordered. Over residues S159 to K168 the composition is skewed to low complexity. Residues G204, D230, and D256 each contribute to the S-adenosyl-L-methionine site.

Belongs to the methyltransferase superfamily. METL family. In terms of assembly, interacts with EP300.

It localises to the mitochondrion. It catalyses the reaction cytidine(32) in tRNA(Ser) + S-adenosyl-L-methionine = N(3)-methylcytidine(32) in tRNA(Ser) + S-adenosyl-L-homocysteine + H(+). The enzyme catalyses cytidine(32) in tRNA(Thr) + S-adenosyl-L-methionine = N(3)-methylcytidine(32) in tRNA(Thr) + S-adenosyl-L-homocysteine + H(+). The catalysed reaction is a cytidine in mRNA + S-adenosyl-L-methionine = an N(3)-methylcytidine in mRNA + S-adenosyl-L-homocysteine + H(+). Mitochondrial S-adenosyl-L-methionine-dependent methyltransferase that mediates N(3)-methylcytidine modification of residue 32 of the tRNA anticodon loop of mitochondrial tRNA(Ser)(UCN) and tRNA(Thr). N(3)-methylcytidine methylation modification regulates mitochondrial translation efficiency and is required for activity of the respiratory chain. N(3)-methylcytidine methylation of mitochondrial tRNA(Ser)(UCN) requires the formation of N(6)-dimethylallyladenosine(37) (i6A37) by TRIT1 as prerequisite. May also mediate N(3)-methylcytidine modification of mRNAs. The existence of N(3)-methylcytidine modification on mRNAs is however unclear, and additional evidences are required to confirm the role of the N(3)-methylcytidine-specific mRNA methyltransferase activity of METTL8 in vivo. The chain is tRNA N(3)-cytidine methyltransferase METTL8, mitochondrial from Homo sapiens (Human).